Here is a 133-residue protein sequence, read N- to C-terminus: Large ribosomal subunit protein uL15 (133 aa).

Positions 1–60 (MALENLKPAQGSTKDRKRVGRGQGSGMGKTSTRGGKGQTARTGYKAKRGFEGGQQPLQRR) are disordered.

Belongs to the universal ribosomal protein uL15 family. As to quaternary structure, part of the 50S ribosomal subunit.

Its function is as follows. Binds to the 23S rRNA. This Wolinella succinogenes (strain ATCC 29543 / DSM 1740 / CCUG 13145 / JCM 31913 / LMG 7466 / NCTC 11488 / FDC 602W) (Vibrio succinogenes) protein is Large ribosomal subunit protein uL15.